A 435-amino-acid chain; its full sequence is uncharacterized protein (435 aa).

The 52-residue stretch at 7-58 folds into the F-box domain; it reads PFPITKLPLVPRCKILKFFDYGDLLDISLCSKRMAQTVRDIHITADLHYLTL.

This is an uncharacterized protein from Caenorhabditis elegans.